The primary structure comprises 880 residues: Xylosyltransferase oxt (880 aa).

The Cytoplasmic segment spans residues 1–14 (MEQSVSARWLRRYR). A helical; Signal-anchor for type II membrane protein membrane pass occupies residues 15 to 35 (PVLIILVLIFGIQLFLAYKSV). Over 36–880 (DIGGGSGSGL…PKSDVDALLK (845 aa)) the chain is Lumenal. Disulfide bonds link Cys-87–Cys-115, Cys-131–Cys-469, Cys-488–Cys-501, and Cys-490–Cys-499. Asn-135 and Asn-139 each carry an N-linked (GlcNAc...) asparagine glycan. A WSC domain is found at 138 to 232 (ANVSLGCYRD…FYAMNIYETG (95 aa)). UDP-alpha-D-xylose-binding positions include Asp-287 and 316–318 (TIW). Asn-346 carries N-linked (GlcNAc...) asparagine glycosylation. 419–420 (DW) contributes to the UDP-alpha-D-xylose binding site. Residues Ser-502 and 526–527 (RK) each bind UDP-alpha-D-xylose. N-linked (GlcNAc...) asparagine glycosylation is found at Asn-700 and Asn-729. Cys-846 and Cys-859 are disulfide-bonded.

The protein belongs to the glycosyltransferase 14 family. XylT subfamily. Requires Ca(2+) as cofactor. The cofactor is Mn(2+). It depends on Mg(2+) as a cofactor.

The protein localises to the endoplasmic reticulum membrane. It is found in the golgi apparatus membrane. The catalysed reaction is UDP-alpha-D-xylose + L-seryl-[protein] = 3-O-(beta-D-xylosyl)-L-seryl-[protein] + UDP + H(+). It functions in the pathway glycan metabolism; chondroitin sulfate biosynthesis. The protein operates within glycan metabolism; heparan sulfate biosynthesis. Functionally, catalyzes the first step in biosynthesis of glycosaminoglycan. Transfers D-xylose from UDP-D-xylose to specific serine residues of the core protein. This chain is Xylosyltransferase oxt, found in Drosophila pseudoobscura pseudoobscura (Fruit fly).